We begin with the raw amino-acid sequence, 1082 residues long: uncharacterized protein (1082 aa).

The 270-residue stretch at 50–319 (TTMTGGVSLA…LDNRPIGVLF (270 aa)) folds into the PNPLA domain. Residues 120–124 (GTSAG) carry the GXSXG motif. The active-site Nucleophile is the Ser-122. Residue Asp-306 is the Proton acceptor of the active site. The DGA/G motif lies at 306–308 (DGG). 4 helical membrane-spanning segments follow: residues 959-979 (IARS…AAAI), 982-1002 (VTVF…LVVL), 1012-1032 (LFAL…TPVV), and 1057-1077 (WWHP…IAAA).

The protein resides in the cell membrane. This is an uncharacterized protein from Mycobacterium tuberculosis (strain ATCC 25618 / H37Rv).